The chain runs to 908 residues: MAEGFVSFGLEKLWDLLSRESERLQGIDEQLDGLKRQLRSLQSLLKDADAKKHGSDRVRNFLEDVKDLVFDAEDIIESYVLNKLRGEGKGVKKHVRRLARFLTDRHKVASDIEGITKRISDVIGEMQSFGIQQIIDGVRSLSLQERQRVQREIRQTYPDSSESDLVGVEQSVEELVGHLVENDIYQVVSIAGMGGIGKTTLARQVFHHDLVRRHFDGFAWVCVSQQFTLKHVWQRILQELQPHDGNILQMDESALQPKLFQLLETGRYLLVLDDVWKKEDWDRIKAVFPRKRGWKMLLTSRNEGVGIHADPTCLTFRASILNPEESWKLCERIVFPRRDETEVRLDEEMEAMGKEMVTHCGGLPLAVKALGGLLANKHTVPEWKRVSDNIGSQIVGGSCLDDNSLNSVNRILSLSYEDLPTHLKHRFLYLAHFPEDSKIYTQDLFNYWAAEGIYDGSTIQDSGEYYLEELVRRNLVIADNRYLSLEFNFCQMHDMMREVCLSKAKEENFLQIIKDPTSTSTINAQSPSRSRRFSIHSGKAFHILGHRNNPKVRSLIVSRFEEDFWIRSASVFHNLTLLRVLDLSRVKFEGGKLPSSIGGLIHLRYLSLYGAVVSHLPSTMRNLKLLLFLNLRVDNKEPIHVPNVLKEMLELRYLSLPQEMDDKTKLELGDLVNLEYLWYFSTQHSSVTDLLRMTKLRNLGVSLSERCNFETLSSSLRELRNLEMLNVLFSPEIVMVDHMGEFVLDHFIHLKQLGLAVRMSKIPDQHQFPPHLAHIHLVHCVMKEDPMPILEKLLHLKSVALSYGAFIGRRVVCSKGGFPQLCALGISGESELEEWIVEEGSMPCLRTLTIHDCEKLKELPDGLKYITSLKELKIREMKREWKEKLVPGGEDYYKVQHIPDVQFINCDL.

The stretch at 15-57 (DLLSRESERLQGIDEQLDGLKRQLRSLQSLLKDADAKKHGSDR) forms a coiled coil. The NB-ARC domain maps to 146-459 (RQRVQREIRQ…AEGIYDGSTI (314 aa)). 192 to 199 (GMGGIGKT) provides a ligand contact to ATP. 3 LRR repeats span residues 575-599 (LTLL…SIGG), 600-623 (LIHL…MRNL), and 842-867 (MPCL…KYIT).

This sequence belongs to the disease resistance NB-LRR family. RPP8/HRT subfamily.

Potential disease resistance protein. The chain is Probable disease resistance RPP8-like protein 4 (RPP8L4) from Arabidopsis thaliana (Mouse-ear cress).